The following is a 436-amino-acid chain: Xylose isomerase (436 aa).

Active-site residues include His-100 and Asp-103. Mg(2+) contacts are provided by Glu-231, Glu-267, His-270, Asp-295, Asp-306, Asp-308, and Asp-338.

It belongs to the xylose isomerase family. Homotetramer. Mg(2+) is required as a cofactor.

It is found in the cytoplasm. It carries out the reaction alpha-D-xylose = alpha-D-xylulofuranose. The polypeptide is Xylose isomerase (Ruegeria sp. (strain TM1040) (Silicibacter sp.)).